The following is a 741-amino-acid chain: Exostosin-1b (741 aa).

Residues 1 to 7 are Cytoplasmic-facing; sequence MQAKKRY. A helical; Signal-anchor for type II membrane protein transmembrane segment spans residues 8–28; it reads LISLLTGAFLVLLIYLGGGGV. The Lumenal portion of the chain corresponds to 29 to 741; it reads PGPAAPGSRS…RKKYREIERL (713 aa). Asn-84 and Asn-325 each carry an N-linked (GlcNAc...) asparagine glycan. 8 residues coordinate UDP-N-acetyl-alpha-D-glucosamine: Arg-435, Arg-544, Asp-560, Glu-561, Asp-562, Glu-648, Asp-649, and Arg-696. Asp-562 is a binding site for Mn(2+). A disulfide bridge connects residues Cys-647 and Cys-699. Asp-649 is an active-site residue.

It belongs to the glycosyltransferase 47 family. Requires Mn(2+) as cofactor.

It localises to the endoplasmic reticulum membrane. It carries out the reaction 3-O-{[(1-&gt;4)-beta-D-GlcA-(1-&gt;4)-alpha-D-GlcNAc](n)-(1-&gt;4)-beta-D-GlcA-(1-&gt;3)-beta-D-Gal-(1-&gt;3)-beta-D-Gal-(1-&gt;4)-beta-D-Xyl}-L-seryl-[protein] + UDP-N-acetyl-alpha-D-glucosamine = 3-O-{alpha-D-GlcNAc-[(1-&gt;4)-beta-D-GlcA-(1-&gt;4)-alpha-D-GlcNAc](n)-(1-&gt;4)-beta-D-GlcA-(1-&gt;3)-beta-D-Gal-(1-&gt;3)-beta-D-Gal-(1-&gt;4)-beta-D-Xyl}-L-seryl-[protein] + UDP + H(+). The enzyme catalyses 3-O-{alpha-D-GlcNAc-[(1-&gt;4)-beta-D-GlcA-(1-&gt;4)-alpha-D-GlcNAc](n)-(1-&gt;4)-beta-D-GlcA-(1-&gt;3)-beta-D-Gal-(1-&gt;3)-beta-D-Gal-(1-&gt;4)-beta-D-Xyl}-L-seryl-[protein] + UDP-alpha-D-glucuronate = 3-O-{[(1-&gt;4)-beta-D-GlcA-(1-&gt;4)-alpha-D-GlcNAc](n+1)-(1-&gt;4)-beta-D-GlcA-(1-&gt;3)-beta-D-Gal-(1-&gt;3)-beta-D-Gal-(1-&gt;4)-beta-D-Xyl}-L-seryl-[protein] + UDP + H(+). It functions in the pathway protein modification; protein glycosylation. Its function is as follows. Glycosyltransferase required for the biosynthesis of heparan-sulfate. This chain is Exostosin-1b (ext1b), found in Danio rerio (Zebrafish).